Consider the following 242-residue polypeptide: uncharacterized protein (242 aa).

This is an uncharacterized protein from Haemophilus influenzae (strain ATCC 51907 / DSM 11121 / KW20 / Rd).